The primary structure comprises 575 residues: Alpha-(1,6)-fucosyltransferase (575 aa).

Residues 1–9 (MRPWTGSWR) lie on the Cytoplasmic side of the membrane. A helical; Signal-anchor for type II membrane protein transmembrane segment spans residues 10 to 30 (WIMLILFAWGTLLFYIGGHLV). The Lumenal segment spans residues 31-575 (RDNDHPDHSS…KYPTYPEAEK (545 aa)). 3 disulfides stabilise this stretch: C204/C266, C212/C230, and C218/C222. Positions 206-493 (KAKKLVCNIN…PDASANFHSL (288 aa)) constitute a GT23 domain. Position 278 is a phosphoserine (S278). Positions 299 to 305 (PRPPYLP) match the SH3-binding motif. The tract at residues 365–366 (RR) is important for donor substrate binding. Residues C465 and C472 are joined by a disulfide bond. One can recognise an SH3 domain in the interval 502–563 (QNAHNQIAIY…PSYKVREKIE (62 aa)).

This sequence belongs to the glycosyltransferase 23 family. Tyrosine phosphorylated by PKDCC/VLK.

It localises to the golgi apparatus. The protein localises to the golgi stack membrane. The catalysed reaction is N(4)-{beta-D-GlcNAc-(1-&gt;2)-alpha-D-Man-(1-&gt;3)-[beta-D-GlcNAc-(1-&gt;2)-alpha-D-Man-(1-&gt;6)]-beta-D-Man-(1-&gt;4)-beta-D-GlcNAc-(1-&gt;4)-beta-D-GlcNAc}-L-asparaginyl-[protein] + GDP-beta-L-fucose = an N(4)-{beta-D-GlcNAc-(1-&gt;2)-alpha-D-Man-(1-&gt;3)-[beta-D-GlcNAc-(1-&gt;2)-alpha-D-Man-(1-&gt;6)]-beta-D-Man-(1-&gt;4)-beta-D-GlcNAc-(1-&gt;4)-[alpha-L-Fuc-(1-&gt;6)]-beta-D-GlcNAc}-L-asparaginyl-[protein] + GDP + H(+). Its pathway is protein modification; protein glycosylation. In terms of biological role, catalyzes the addition of fucose in alpha 1-6 linkage to the first GlcNAc residue, next to the peptide chains in N-glycans. The sequence is that of Alpha-(1,6)-fucosyltransferase (FUT8) from Homo sapiens (Human).